A 388-amino-acid polypeptide reads, in one-letter code: GTPase Obg (388 aa).

The region spanning 1–159 is the Obg domain; it reads MKFIDEASIR…RSLRLELLLL (159 aa). The OBG-type G domain maps to 160 to 333; the sequence is ADVGLLGMPN…LSLKLLDYIA (174 aa). GTP-binding positions include 166–173, 191–195, 213–216, 283–286, and 314–316; these read GMPNAGKS, FTTLV, DIPG, NKTD, and SAF. Mg(2+) is bound by residues S173 and T193.

Belongs to the TRAFAC class OBG-HflX-like GTPase superfamily. OBG GTPase family. In terms of assembly, monomer. Mg(2+) serves as cofactor.

The protein localises to the cytoplasm. Functionally, an essential GTPase which binds GTP, GDP and possibly (p)ppGpp with moderate affinity, with high nucleotide exchange rates and a fairly low GTP hydrolysis rate. Plays a role in control of the cell cycle, stress response, ribosome biogenesis and in those bacteria that undergo differentiation, in morphogenesis control. This is GTPase Obg from Shewanella denitrificans (strain OS217 / ATCC BAA-1090 / DSM 15013).